The primary structure comprises 268 residues: Virulence plasmid ParA family protein pGP5-D (268 aa).

Position 13–20 (13–20) interacts with ATP; sequence FKGGTGKT.

The protein belongs to the ParA family.

The chain is Virulence plasmid ParA family protein pGP5-D from Chlamydia muridarum (strain MoPn / Nigg).